The primary structure comprises 310 residues: tRNA dimethylallyltransferase (310 aa).

13-20 (GPTASGKT) provides a ligand contact to ATP. 15–20 (TASGKT) provides a ligand contact to substrate. 4 interaction with substrate tRNA regions span residues 38-41 (DSAL), 162-166 (QRLSR), 243-248 (RCVGYR), and 276-283 (KRQITWLR).

Belongs to the IPP transferase family. Monomer. It depends on Mg(2+) as a cofactor.

The enzyme catalyses adenosine(37) in tRNA + dimethylallyl diphosphate = N(6)-dimethylallyladenosine(37) in tRNA + diphosphate. Its function is as follows. Catalyzes the transfer of a dimethylallyl group onto the adenine at position 37 in tRNAs that read codons beginning with uridine, leading to the formation of N6-(dimethylallyl)adenosine (i(6)A). This chain is tRNA dimethylallyltransferase, found in Aliivibrio fischeri (strain MJ11) (Vibrio fischeri).